A 218-amino-acid polypeptide reads, in one-letter code: Ras-related protein RABE1e (218 aa).

GTP is bound at residue 22–29 (GDSGVGKS). Residues 44–52 (FITTIGIDF) carry the Effector region motif. Residues 70-74 (DTAGQ), 128-131 (NKAD), and 159-160 (SA) contribute to the GTP site. The tract at residues 182–218 (TESDTKAEPQGIKITKQDANKASSSSTNEKSACCSYV) is disordered. The span at 201–211 (NKASSSSTNEK) shows a compositional bias: polar residues. Residues C214 and C215 are each lipidated (S-geranylgeranyl cysteine).

The protein belongs to the small GTPase superfamily. Rab family. Interacts with PI5K2.

Its subcellular location is the golgi apparatus membrane. It localises to the cell membrane. In terms of biological role, involved in membrane trafficking from the Golgi to the plasma membrane. The sequence is that of Ras-related protein RABE1e (RABE1E) from Arabidopsis thaliana (Mouse-ear cress).